A 424-amino-acid chain; its full sequence is Histidine--tRNA ligase (424 aa).

The protein belongs to the class-II aminoacyl-tRNA synthetase family. As to quaternary structure, homodimer.

The protein localises to the cytoplasm. The catalysed reaction is tRNA(His) + L-histidine + ATP = L-histidyl-tRNA(His) + AMP + diphosphate + H(+). This Yersinia pestis bv. Antiqua (strain Antiqua) protein is Histidine--tRNA ligase.